The chain runs to 879 residues: Alanine--tRNA ligase (879 aa).

Residues H570, H574, C672, and H676 each coordinate Zn(2+).

The protein belongs to the class-II aminoacyl-tRNA synthetase family. Zn(2+) is required as a cofactor.

The protein localises to the cytoplasm. It catalyses the reaction tRNA(Ala) + L-alanine + ATP = L-alanyl-tRNA(Ala) + AMP + diphosphate. Its function is as follows. Catalyzes the attachment of alanine to tRNA(Ala) in a two-step reaction: alanine is first activated by ATP to form Ala-AMP and then transferred to the acceptor end of tRNA(Ala). Also edits incorrectly charged Ser-tRNA(Ala) and Gly-tRNA(Ala) via its editing domain. This is Alanine--tRNA ligase from Nitratidesulfovibrio vulgaris (strain ATCC 29579 / DSM 644 / CCUG 34227 / NCIMB 8303 / VKM B-1760 / Hildenborough) (Desulfovibrio vulgaris).